A 393-amino-acid chain; its full sequence is Chorismate synthase (393 aa).

2 residues coordinate NADP(+): R40 and R46. FMN-binding positions include 129–131 (RSS), 249–250 (QA), G301, 316–320 (KPIPT), and R342.

The protein belongs to the chorismate synthase family. Homotetramer. The cofactor is FMNH2.

The enzyme catalyses 5-O-(1-carboxyvinyl)-3-phosphoshikimate = chorismate + phosphate. It functions in the pathway metabolic intermediate biosynthesis; chorismate biosynthesis; chorismate from D-erythrose 4-phosphate and phosphoenolpyruvate: step 7/7. Its function is as follows. Catalyzes the anti-1,4-elimination of the C-3 phosphate and the C-6 proR hydrogen from 5-enolpyruvylshikimate-3-phosphate (EPSP) to yield chorismate, which is the branch point compound that serves as the starting substrate for the three terminal pathways of aromatic amino acid biosynthesis. This reaction introduces a second double bond into the aromatic ring system. This Geobacter metallireducens (strain ATCC 53774 / DSM 7210 / GS-15) protein is Chorismate synthase.